A 353-amino-acid chain; its full sequence is Putative transport protein YrrI (353 aa).

The next 8 membrane-spanning stretches (helical) occupy residues 8–28 (LLLW…FFML), 37–57 (LVIK…YLLL), 77–97 (IYVL…PVLI), 165–185 (FLIA…IELM), 220–240 (LLVC…FGLP), 243–263 (LILG…PFIG), 269–289 (LIAM…VFIL), and 311–331 (VVIM…GMIL).

This sequence belongs to the autoinducer-2 exporter (AI-2E) (TC 2.A.86) family.

Its subcellular location is the cell membrane. The chain is Putative transport protein YrrI (yrrI) from Bacillus subtilis (strain 168).